Consider the following 363-residue polypeptide: S-adenosylmethionine:tRNA ribosyltransferase-isomerase (363 aa).

This sequence belongs to the QueA family. In terms of assembly, monomer.

The protein resides in the cytoplasm. It catalyses the reaction 7-aminomethyl-7-carbaguanosine(34) in tRNA + S-adenosyl-L-methionine = epoxyqueuosine(34) in tRNA + adenine + L-methionine + 2 H(+). It participates in tRNA modification; tRNA-queuosine biosynthesis. In terms of biological role, transfers and isomerizes the ribose moiety from AdoMet to the 7-aminomethyl group of 7-deazaguanine (preQ1-tRNA) to give epoxyqueuosine (oQ-tRNA). The chain is S-adenosylmethionine:tRNA ribosyltransferase-isomerase from Mannheimia succiniciproducens (strain KCTC 0769BP / MBEL55E).